The primary structure comprises 191 residues: CASP-like protein 1D1 (191 aa).

Over 1 to 22 (MTSTSKDTPESGYAVPPPNLFG) the chain is Cytoplasmic. Residues 23-43 (VDFGLRLLLLASAVSALVVLV) traverse the membrane as a helical segment. The Extracellular segment spans residues 44–73 (TSKQTESIPTSLPPPFPAFISRDAKFQHSP). A helical membrane pass occupies residues 74 to 94 (AFIYLLVALSVTCFYSIITMV). Residues 95–118 (ASFAAITSPSSSPRMLFHLVLSDA) are Cytoplasmic-facing. A helical membrane pass occupies residues 119 to 139 (VMAGVMASAAGTAGSVAYLGL). Over 140–160 (KGNSHVNWNKVCNVYDKFCRH) the chain is Extracellular. The chain crosses the membrane as a helical span at residues 161–181 (VGSSAAVSLVASVLLVSLVVL). Over 182–191 (SSYSLYRRCR) the chain is Cytoplasmic.

This sequence belongs to the Casparian strip membrane proteins (CASP) family. As to quaternary structure, homodimer and heterodimers.

It localises to the cell membrane. The sequence is that of CASP-like protein 1D1 from Musa acuminata (Banana).